Reading from the N-terminus, the 777-residue chain is MFSLKPPKPTFRSYLLPPPQTDDKINSEPKIKKLEPVLLPGEIVVNEVNFVRKCIATDTSQYDLWGKLICSNFKISFITDDPMPLQKFHYRNLLLGEHDVPLTCIEQIVTVNDHKRKQKVLGPNQKLKFNPTELIIYCKDFRIVRFRFDESGPESAKKVCLAIAHYSQPTDLQLLFAFEYVGKKYHNSANKINGIPSGDGGGGGGGGNGAGGGSSQKTPLFETYSDWDREIKRTGASGWRVCSINEGYMISTCLPEYIVVPSSLADQDLKIFSHSFVGRRMPLWCWSHSNGSALVRMALIKDVLQQRKIDQRICNAITKSHPQRSDVYKSDLDKTLPNIQEVQAAFVKLKQLCVNEPFEETEEKWLSSLENTRWLEYVRAFLKHSAELVYMLESKHLSVVLQEEEGRDLSCCVASLVQVMLDPYFRTITGFQSLIQKEWVMAGYQFLDRCNHLKRSEKESPLFLLFLDATWQLLEQYPAAFEFSETYLAVLYDSTRISLFGTFLFNSPHQRVKQSTEFAISKNIQLGDEKGLKFPSVWDWSLQFTAKDRTLFHNPFYIGKSTPCIQNGSVKSFKRTKKSYSSTLRGMPSALKNGIISDQELLPRRNSLILKPKPDPAQQTDSQNSDTEQYFREWFSKPANLHGVILPRVSGTHIKLWKLCYFRWVPEAQISLGGSITAFHKLSLLADEVDVLSRMLRQQRSGPLEACYGELGQSRMYFNASGPHHTDTSGTPEFLSSSFPFSPVGNLCRRSILGTPLSKFLSGAKIWLSTETLANED.

The tract at residues 196–217 (PSGDGGGGGGGGNGAGGGSSQK) is disordered. The span at 197–214 (SGDGGGGGGGGNGAGGGS) shows a compositional bias: gly residues. The 441-residue stretch at 221-661 (FETYSDWDRE…THIKLWKLCY (441 aa)) folds into the Myotubularin phosphatase domain. 2 positions are modified to phosphoserine: S607 and S751.

Belongs to the protein-tyrosine phosphatase family. Non-receptor class myotubularin subfamily.

This is Myotubularin-related protein 10 (MTMR10) from Homo sapiens (Human).